A 132-amino-acid polypeptide reads, in one-letter code: RuBisCO chaperone RbcX (132 aa).

The segment at 110–132 is disordered; that stretch reads HLSLSNPSPESEQQTISDTDWDH. Residues 111 to 132 show a composition bias toward polar residues; it reads LSLSNPSPESEQQTISDTDWDH.

This sequence belongs to the RbcX family. Homodimer. Interacts with the exposed C-terminal peptide of RbcL via its central cleft, contacts a second RbcL monomer via its peripheral polar surface. RbcX and Raf1 can bind simultaneously to RbcL.

The protein resides in the carboxysome. The protein localises to the cytoplasm. Its function is as follows. An RbcL-specific chaperone. The central cleft of the RbcX homodimer (RbcX2) binds the C-terminus of an RbcL monomer, stabilizing the C-terminus and probably preventing its reassociation with chaperonin GroEL-ES. At the same time the peripheral region of RbcX2 binds a second RbcL monomer, bridging the RbcL homodimers in the correct orientation. The RbcX2(2)-bound RbcL dimers then assemble into the RbcL8 core (RbcL8-(RbcX2)8). RbcS binding triggers the release of RbcX2. Functionally, when rbcL-rbcX-rbcS or rbcL-rbcS were overexpressed in E.coli no change in reconstituted RuBisCO activity was observed, which suggests RbcX plays no role in RuBisCO assembly in this system. However in PubMed:8472962 E.coli chaperones groL and groS were also overexpressed, which may compensate for lack of rbcX. This is RuBisCO chaperone RbcX from Nostoc sp. (strain PCC 7120 / SAG 25.82 / UTEX 2576).